Here is a 293-residue protein sequence, read N- to C-terminus: tRNA pseudouridine synthase B (293 aa).

The active-site Nucleophile is Asp-38.

The protein belongs to the pseudouridine synthase TruB family. Type 1 subfamily.

It catalyses the reaction uridine(55) in tRNA = pseudouridine(55) in tRNA. Responsible for synthesis of pseudouridine from uracil-55 in the psi GC loop of transfer RNAs. In Nostoc sp. (strain PCC 7120 / SAG 25.82 / UTEX 2576), this protein is tRNA pseudouridine synthase B.